The sequence spans 303 residues: Mitochondrial carrier homolog 2 (303 aa).

Alanine 2 bears the N-acetylalanine mark. Residues 2 to 15 are Mitochondrial intermembrane-facing; it reads ADAASQVLLGSGLT. Solcar repeat units lie at residues 2 to 98 and 118 to 206; these read ADAA…YQES and DHVI…VNTY. The chain crosses the membrane as a helical span at residues 16–36; the sequence is ILSQPLMYVKVLIQVGYEPLP. At 37–77 the chain is on the cytoplasmic side; sequence PTIGRNIFGRQVCQLPGLFSYAQHIASIDGRRGLFTGLTPR. A helical transmembrane segment spans residues 78-92; it reads LCSGVLGTVVHGKVL. At 93–135 the chain is on the mitochondrial intermembrane side; that stretch reads QHYQESDKGEELGPGNVQKEVSSSFDHVIKETTREMIARSAAT. The helical transmembrane segment at 136–156 threads the bilayer; it reads LITHPFHVITLRSMVQFIGRE. Residues 157–180 are Cytoplasmic-facing; the sequence is SKYCGLCDSIITIYREEGILGFFA. Residues 181–199 traverse the membrane as a helical segment; sequence GLVPRLLGDILSLWLCNSL. Residues 200–231 lie on the Mitochondrial intermembrane side of the membrane; it reads AYLVNTYALDSGVSTMNEMKSYSQAVTGFFAS. The chain crosses the membrane as a helical span at residues 232–252; sequence MLTYPFVLVSNLMAVNNCGLA. The Cytoplasmic portion of the chain corresponds to 253-280; the sequence is GGCPPYSPIYTSWIDCWCMLQKEGNMSR. A helical membrane pass occupies residues 281–303; it reads GNSLFFRKVPFGKTYCCDLKMLI.

Belongs to the mitochondrial carrier (TC 2.A.29) family. As to quaternary structure, interacts with p15BID.

The protein localises to the mitochondrion outer membrane. Its function is as follows. Protein insertase that mediates insertion of transmembrane proteins into the mitochondrial outer membrane. Catalyzes insertion of proteins with alpha-helical transmembrane regions, such as signal-anchored, tail-anchored and multi-pass membrane proteins. Does not mediate insertion of beta-barrel transmembrane proteins. Also acts as a receptor for the truncated form of pro-apoptotic BH3-interacting domain death agonist (p15 BID) and has therefore a critical function in apoptosis. Regulates the quiescence/cycling of hematopoietic stem cells (HSCs). Acts as a regulator of mitochondrial fusion, essential for the naive-to-primed interconversion of embryonic stem cells (ESCs). Acts as a regulator of lipid homeostasis and has a regulatory role in adipocyte differentiation and biology. This Homo sapiens (Human) protein is Mitochondrial carrier homolog 2.